The primary structure comprises 469 residues: Probable Xaa-Pro aminopeptidase PEPP (469 aa).

4 residues coordinate Mn(2+): aspartate 264, aspartate 275, glutamate 398, and glutamate 438.

This sequence belongs to the peptidase M24B family. Mn(2+) serves as cofactor.

It carries out the reaction Release of any N-terminal amino acid, including proline, that is linked to proline, even from a dipeptide or tripeptide.. Catalyzes the removal of a penultimate prolyl residue from the N-termini of peptides. This Ajellomyces capsulatus (strain G186AR / H82 / ATCC MYA-2454 / RMSCC 2432) (Darling's disease fungus) protein is Probable Xaa-Pro aminopeptidase PEPP (PEPP).